A 582-amino-acid chain; its full sequence is Aspartate--tRNA ligase (582 aa).

Glutamate 174 contributes to the L-aspartate binding site. An aspartate region spans residues 198 to 201; that stretch reads QITK. Arginine 220 contacts L-aspartate. ATP is bound by residues 220–222 and glutamine 229; that span reads RDE. Histidine 443 is an L-aspartate binding site. Glutamate 477 contacts ATP. L-aspartate is bound at residue arginine 484. 529-532 is a binding site for ATP; sequence GLDR.

The protein belongs to the class-II aminoacyl-tRNA synthetase family. Type 1 subfamily. As to quaternary structure, homodimer.

The protein localises to the cytoplasm. The enzyme catalyses tRNA(Asp) + L-aspartate + ATP = L-aspartyl-tRNA(Asp) + AMP + diphosphate. Its function is as follows. Catalyzes the attachment of L-aspartate to tRNA(Asp) in a two-step reaction: L-aspartate is first activated by ATP to form Asp-AMP and then transferred to the acceptor end of tRNA(Asp). This Streptococcus pyogenes serotype M1 protein is Aspartate--tRNA ligase.